The sequence spans 90 residues: Small ribosomal subunit protein uS15c (90 aa).

Belongs to the universal ribosomal protein uS15 family. In terms of assembly, part of the 30S ribosomal subunit.

It is found in the plastid. It localises to the chloroplast. The sequence is that of Small ribosomal subunit protein uS15c (rps15-A) from Pelargonium hortorum (Common geranium).